Here is a 364-residue protein sequence, read N- to C-terminus: Coproporphyrin III ferrochelatase (364 aa).

Residues Arg-29 and Tyr-118 each coordinate Fe-coproporphyrin III. Fe(2+) contacts are provided by His-169 and Glu-250.

The protein belongs to the ferrochelatase family.

The protein resides in the cytoplasm. It catalyses the reaction Fe-coproporphyrin III + 2 H(+) = coproporphyrin III + Fe(2+). It participates in porphyrin-containing compound metabolism; protoheme biosynthesis. Its function is as follows. Involved in coproporphyrin-dependent heme b biosynthesis. Catalyzes the insertion of ferrous iron into coproporphyrin III to form Fe-coproporphyrin III. This chain is Coproporphyrin III ferrochelatase, found in Streptococcus pneumoniae (strain ATCC 700669 / Spain 23F-1).